Reading from the N-terminus, the 395-residue chain is MGFLTVLYLSLAALSVTNAAQIMSAPNGAEVVPNGYIVVMKDDTSKQDFASHRVWVSGIHHNITRRGLDGEGVKQTYDFDNLRGYSGIFDKDTIKDISNDPKVAFVEPDAIISQHVVVQQRKAPWGLSRLSNRKGGRNYVFDSTAGAGVWAYVVDSGVDIRHAEFRGRAVWGSNQVDNQNSDGTGHGTHVAGTIAGKTYGIAKKAKVIAVKVLNSEGKGPTSGIIAGINWSINNARQNGMLHKSVINMSLGGSYSAGLNHATAQAIKAGIFVSVSAGNDNINSNNNSPASEKSVCTIAASTEDDGKASFSNWGPAVDLYAPGHNILSARPGGGSQVMSGTSMAAPHACGVAAYLIAKEGIPGSRACLRLKQLSQPTIHNPGPDTTRRLLYNGSGR.

The first 19 residues, 1 to 19 (MGFLTVLYLSLAALSVTNA), serve as a signal peptide directing secretion. Positions 20-115 (AQIMSAPNGA…VEPDAIISQH (96 aa)) are excised as a propeptide. Residues 36–112 (YIVVMKDDTS…VAFVEPDAII (77 aa)) form the Inhibitor I9 domain. One can recognise a Peptidase S8 domain in the interval 124-395 (PWGLSRLSNR…RRLLYNGSGR (272 aa)). Active-site charge relay system residues include Asp155 and His186. 2 N-linked (GlcNAc...) asparagine glycosylation sites follow: Asn229 and Asn247. The active-site Charge relay system is the Ser341. Positions 374–395 (QPTIHNPGPDTTRRLLYNGSGR) are disordered. Asn391 carries an N-linked (GlcNAc...) asparagine glycan.

It belongs to the peptidase S8 family.

It localises to the secreted. Its function is as follows. Secreted subtilisin-like serine protease with keratinolytic activity that contributes to pathogenicity. The polypeptide is Subtilisin-like protease 5 (SUB5) (Arthroderma otae (strain ATCC MYA-4605 / CBS 113480) (Microsporum canis)).